Here is a 414-residue protein sequence, read N- to C-terminus: Patatin-like protein 1 (414 aa).

One can recognise a PNPLA domain in the interval 20 to 224; that stretch reads LAIDGGGIRG…AANNPTMVAM (205 aa). The short motif at 24–29 is the GXGXXG element; that stretch reads GGGIRG. Residues 62 to 66 carry the GXSXG motif; it reads GTSTG. The active-site Nucleophile is S64. The active-site Proton acceptor is the D211. A DGA/G motif is present at residues 211-213; it reads DGG.

It belongs to the patatin family.

In terms of biological role, possesses non-specific lipolytic acyl hydrolase (LAH) activity. Hydrolyzes phospholipids as well as galactolipids. May play a role in disease resistance. This chain is Patatin-like protein 1 (PLP1), found in Oryza sativa subsp. indica (Rice).